We begin with the raw amino-acid sequence, 397 residues long: Tryptophan synthase beta chain (397 aa).

Position 87 is an N6-(pyridoxal phosphate)lysine (K87).

This sequence belongs to the TrpB family. As to quaternary structure, tetramer of two alpha and two beta chains. Pyridoxal 5'-phosphate serves as cofactor.

The enzyme catalyses (1S,2R)-1-C-(indol-3-yl)glycerol 3-phosphate + L-serine = D-glyceraldehyde 3-phosphate + L-tryptophan + H2O. It participates in amino-acid biosynthesis; L-tryptophan biosynthesis; L-tryptophan from chorismate: step 5/5. The beta subunit is responsible for the synthesis of L-tryptophan from indole and L-serine. The protein is Tryptophan synthase beta chain of Escherichia coli O157:H7.